The primary structure comprises 98 residues: Large ribosomal subunit protein uL23 (98 aa).

Belongs to the universal ribosomal protein uL23 family. In terms of assembly, part of the 50S ribosomal subunit. Contacts protein L29, and trigger factor when it is bound to the ribosome.

Its function is as follows. One of the early assembly proteins it binds 23S rRNA. One of the proteins that surrounds the polypeptide exit tunnel on the outside of the ribosome. Forms the main docking site for trigger factor binding to the ribosome. In Cereibacter sphaeroides (strain ATCC 17025 / ATH 2.4.3) (Rhodobacter sphaeroides), this protein is Large ribosomal subunit protein uL23.